The sequence spans 371 residues: Aromatic peroxygenase (371 aa).

Positions 1–18 (MKYFPLFPTLVFAARVVA) are cleaved as a signal peptide. Residues 19-43 (FPAYASLAGLSQQELDAIIPTLEAR) constitute a propeptide that is removed on maturation. Asparagine 54 carries an N-linked (GlcNAc...) asparagine glycan. Residue cysteine 79 participates in heme binding. N-linked (GlcNAc...) asparagine glycans are attached at residues asparagine 184, asparagine 204, asparagine 225, and asparagine 329. An intrachain disulfide couples cysteine 321 to cysteine 362.

The protein belongs to the chloroperoxidase family. Requires heme b as cofactor. In terms of processing, N-glycosylated.

The enzyme catalyses RH + H2O2 = ROH + H2O.. Functionally, aromatic peroxidase that oxidizes aryl alcohols into the corresponding aldehydes and then into the corresponding benzoic acids. Oxidizes toluene and naphthalene. Catalyzes the regioselective peroxide-dependent hydroxylation of propranolol and diclofenac to 5-hydroxypropranolol and 4'-hydroxydiclofenac. Catalyzes the regioselective peroxide-dependent hydroxylation of naphthalene to 1-naphthol or 2-naphthol via a naphthalene 1,2-oxide intermediate. Catalyzes the regioselective peroxide-dependent oxidation of pyridine to pyridine N-oxide. Halogenates monochlorodimedone and phenol. Oxidizes the sulfur-containing heterocycle dibenzothiophene to yield ring-hydroxylation products and to a lesser extent sulfoxidation products. The polypeptide is Aromatic peroxygenase (Cyclocybe aegerita (Black poplar mushroom)).